An 847-amino-acid chain; its full sequence is Protein HIR2 (847 aa).

WD repeat units lie at residues 10 to 46, 113 to 153, 155 to 194, 259 to 305, and 309 to 348; these read LHDGQLTQCEVDDNKLYIIGGKYLSIWDSQTLLNAAT, KDNE…LKSS, ELKSKPISIITDPLGQLLTVILQNRSVQIYQYDSHGTTKL, KFSP…PLFD, and VVNSYITDLEWDNSGLGLFAISQDGQLVIFAFQENELGDV. The tract at residues 368 to 399 is disordered; it reads PFKPKAEEPDTKLPPNKTAQQTTTNSKKQPKA. A compositionally biased stretch (polar residues) spans 384-394; that stretch reads KTAQQTTTNSK. 2 WD repeats span residues 508–548 and 558–597; these read RKDN…IYVT and PMLLGVPVSFLEGSGDYLLCITSIGQMYCWNVNTGKIAFP.

It belongs to the WD repeat HIR1 family.

It localises to the nucleus. Its function is as follows. Required for replication-independent chromatin assembly and for the periodic repression of histone gene transcription during the cell cycle. The protein is Protein HIR2 (HIR2) of Kluyveromyces lactis (strain ATCC 8585 / CBS 2359 / DSM 70799 / NBRC 1267 / NRRL Y-1140 / WM37) (Yeast).